A 119-amino-acid chain; its full sequence is Large ribosomal subunit protein uL18 (119 aa).

This sequence belongs to the universal ribosomal protein uL18 family. As to quaternary structure, part of the 50S ribosomal subunit; part of the 5S rRNA/L5/L18/L25 subcomplex. Contacts the 5S and 23S rRNAs.

Its function is as follows. This is one of the proteins that bind and probably mediate the attachment of the 5S RNA into the large ribosomal subunit, where it forms part of the central protuberance. This Mesorhizobium japonicum (strain LMG 29417 / CECT 9101 / MAFF 303099) (Mesorhizobium loti (strain MAFF 303099)) protein is Large ribosomal subunit protein uL18.